The primary structure comprises 245 residues: Uridylate kinase (245 aa).

20–23 (KLSG) lines the ATP pocket. Residue glycine 60 participates in UMP binding. ATP contacts are provided by glycine 61 and arginine 65. UMP contacts are provided by residues aspartate 80 and 141 to 148 (AGLPYFST). Residues tyrosine 175 and aspartate 178 each contribute to the ATP site.

The protein belongs to the UMP kinase family. In terms of assembly, homohexamer.

Its subcellular location is the cytoplasm. It carries out the reaction UMP + ATP = UDP + ADP. It functions in the pathway pyrimidine metabolism; CTP biosynthesis via de novo pathway; UDP from UMP (UMPK route): step 1/1. Its activity is regulated as follows. Inhibited by UTP. In terms of biological role, catalyzes the reversible phosphorylation of UMP to UDP. The polypeptide is Uridylate kinase (Arthrobacter sp. (strain FB24)).